Reading from the N-terminus, the 376-residue chain is DINGGGATLPQKLYLTPDVLTAGFAPYIGVGSGKGKIAFLENKYNQFGTDTTKNVHWAGSDSKLTATELATYAADKEPGWGKLIQVPSVATSVAIPFRKAGANAVDLSVKELCGVFSGRIADWSGITGAGRSGPIQVVYRAESSGTTELFTRFLNAKCTTEPGTFAVTTTFANSYSLGLTPLAGAVAATGSDGVMAALNDTTVAEGRITYISPDFAAPTLAGLDDATKVARVGKGVVNGVAVEGKSPAAANVSAAISVVPLPAAADRGNPDVWVPVFGATTGGGVVAYPDSGYPILGFTNLIFSQCYANATQTGQVRDFFTKHYGTSANNDAAIEANAFVPLPSNWKAAVRASFLTASNALSIGNTNVCNGKGRPQ.

2 disulfides stabilise this stretch: cysteine 113–cysteine 158 and cysteine 306–cysteine 369.

As to quaternary structure, heterooligomer with human PON1. As to expression, found in human plasma.

Its subcellular location is the secreted. Phosphate-binding protein. This Unknown prokaryotic organism protein is Phosphate-binding protein.